Here is a 234-residue protein sequence, read N- to C-terminus: Triosephosphate isomerase (234 aa).

8–10 contributes to the substrate binding site; it reads NFK. His90 functions as the Electrophile in the catalytic mechanism. Catalysis depends on Glu159, which acts as the Proton acceptor. Substrate contacts are provided by residues Gly165, Ser197, and 218 to 219; that span reads GS.

Homodimer.

It is found in the cytoplasm. It catalyses the reaction D-glyceraldehyde 3-phosphate = dihydroxyacetone phosphate. The protein operates within carbohydrate biosynthesis; gluconeogenesis. It functions in the pathway carbohydrate degradation; glycolysis; D-glyceraldehyde 3-phosphate from glycerone phosphate: step 1/1. Its function is as follows. Involved in the gluconeogenesis. Catalyzes stereospecifically the conversion of dihydroxyacetone phosphate (DHAP) to D-glyceraldehyde-3-phosphate (G3P). The chain is Triosephosphate isomerase from Helicobacter pylori (strain ATCC 700392 / 26695) (Campylobacter pylori).